The sequence spans 715 residues: MTTTSAFMLNVRLDNVAVVAIDVPGEKVNTLKAEFAAQVRAILKQIRENKALQGVVFISAKADNFIAGADINMIGHCQNAQEAETLARQGQQLMAEIQALPVPVIAAIHGACLGGGLEMALACHRRICTDDVKTVLGLPEVQLGLLPGSGGTQRLPRLVGVSTALDMILTGKQLRARQALKAGLVDDVVPQTILLEAAVELAKKERLAQRTLPVRERILAGPLGRALLFRLVRKKTAQKTQGNYPATERIIDVIETGLAQGSSSGYDAEARAFGELAMTPQSQALRAIFFASTEVKKDPGSDAPPGPLNSVGILGGGLMGGGIAWVTACKGGLPVRIKDINTQGINHALKYSWDLLETKVRRRHIKASERDKQLALISGSTDYRGFSHRDLVIEAVFEDLPLKQQMVAEVEQNCAAHTIFASNTSSLPIGDIAANAARPEQVIGLHFFSPVEKMPLVEVIPHASTSAQTIATTVKLAKKQGKTPIVVSDKAGFYVNRILAPYINEAIRMLTEGERVEHIDAALVKFGFPVGPIQLLDEVGIDTGTKIIPVLEAAYGERFSAPANVVASILNDDRKGRKNGRGFYLYGEKGRKSKKQVDPAIYKLIGVQGQSRLSAQQVAERCVMLMLNEAARCFDEKVIRSARDGDIGAVFGIGFPPFLGGPFRYMDALGPGEMVATLQRLAALYGPRYAPCEQLVRMAERREHFWTNGETDQGN.

The segment at 1–190 is enoyl-CoA hydratase; the sequence is MTTTSAFMLN…KAGLVDDVVP (190 aa). Positions 306-715 are 3-hydroxyacyl-CoA dehydrogenase; it reads GPLNSVGILG…WTNGETDQGN (410 aa).

It in the N-terminal section; belongs to the enoyl-CoA hydratase/isomerase family. The protein in the central section; belongs to the 3-hydroxyacyl-CoA dehydrogenase family. As to quaternary structure, heterotetramer of two alpha chains (FadJ) and two beta chains (FadI).

It localises to the cytoplasm. It catalyses the reaction a (3S)-3-hydroxyacyl-CoA = a (2E)-enoyl-CoA + H2O. The enzyme catalyses a 4-saturated-(3S)-3-hydroxyacyl-CoA = a (3E)-enoyl-CoA + H2O. The catalysed reaction is a (3S)-3-hydroxyacyl-CoA + NAD(+) = a 3-oxoacyl-CoA + NADH + H(+). It carries out the reaction (3S)-3-hydroxybutanoyl-CoA = (3R)-3-hydroxybutanoyl-CoA. Its pathway is lipid metabolism; fatty acid beta-oxidation. Its function is as follows. Catalyzes the formation of a hydroxyacyl-CoA by addition of water on enoyl-CoA. Also exhibits 3-hydroxyacyl-CoA epimerase and 3-hydroxyacyl-CoA dehydrogenase activities. The protein is Fatty acid oxidation complex subunit alpha of Salmonella paratyphi B (strain ATCC BAA-1250 / SPB7).